A 66-amino-acid chain; its full sequence is Putative ankyrin repeat protein RF_pd14 (66 aa).

The stretch at 14 to 66 (KLNQKLMRAAATGDIEAVQKLVLRGADIYCRDHQGDTALSLAAGSGYLDILDI) is one ANK repeat.

In Rickettsia felis (strain ATCC VR-1525 / URRWXCal2) (Rickettsia azadi), this protein is Putative ankyrin repeat protein RF_pd14.